Reading from the N-terminus, the 134-residue chain is uncharacterized protein (134 aa).

Residues methionine 1–glutamate 30 form a disordered region. Basic and acidic residues predominate over residues arginine 10–glutamate 30.

This is an uncharacterized protein from Homo sapiens (Human).